We begin with the raw amino-acid sequence, 501 residues long: MAGSQQQQQQQAVSKPTGGKHGNNLPLWGNEKTMNLNPMILTNVLSSPYFKVQLYELKTYHEVVDEIYFKVNHVEPWEKGSRKTAGQTGMCGGVRGVGTGGIVSTAFCLLYKLFTLKLTRKQVMGLITHSDSPDIRALGFMYIRYTQPPPDLVDWYDEFLDDEEELDVKAGGGCVMTVGEMLRSFLTKLEWFSTLFPRIPVPVQKAIDQHMKSRPRKPPQKDEQEEEEEEATAAPAADTGRHGDKRRSRTPRRSPSPRKSQNRSRSRSHHRERHGASFDYELERERDRQRKEREGKDRDRDRDRDRERDRERDRDRRRSRTPDRNAERRRSRSRERRRSRSTSRDKRTERKDRDKDREAESERERSRKKDREHHKDRERSKDKRSKGEGEERRHKDDKEEKKHREEKRSKRSRSRSRDRKHKAERSSKKRSRSGSRSRQEAGEEKNRKRERSHSKDRQHKRSRSKERSHRRESSNERIHARQERPSSESGERTNSVRADSP.

Residues 1–11 show a composition bias toward low complexity; sequence MAGSQQQQQQQ. 2 disordered regions span residues 1–28 and 208–501; these read MAGS…LPLW and DQHM…ADSP. Over residues 243 to 273 the composition is skewed to basic residues; the sequence is GDKRRSRTPRRSPSPRKSQNRSRSRSHHRER. A coiled-coil region spans residues 281–302; the sequence is ELERERDRQRKEREGKDRDRDR. The segment covering 281–328 has biased composition (basic and acidic residues); sequence ELERERDRQRKEREGKDRDRDRDRDRERDRERDRDRRRSRTPDRNAER. Residues 329–341 are compositionally biased toward basic residues; sequence RRSRSRERRRSRS. Basic and acidic residues predominate over residues 342 to 408; sequence TSRDKRTERK…EEKKHREEKR (67 aa). Residues 409-435 show a composition bias toward basic residues; sequence SKRSRSRSRDRKHKAERSSKKRSRSGS. A compositionally biased stretch (basic and acidic residues) spans 437–447; that stretch reads SRQEAGEEKNR. Residues 448 to 468 are compositionally biased toward basic residues; the sequence is KRERSHSKDRQHKRSRSKERS. Residues 469–491 show a composition bias toward basic and acidic residues; that stretch reads HRRESSNERIHARQERPSSESGE. Over residues 492–501 the composition is skewed to polar residues; that stretch reads RTNSVRADSP.

The protein belongs to the PRP38 family.

The protein localises to the nucleus. In terms of biological role, may be required for pre-mRNA splicing. The protein is Pre-mRNA-splicing factor 38B (prpf38b) of Danio rerio (Zebrafish).